The chain runs to 454 residues: tRNA modification GTPase MnmE (454 aa).

Residues Arg23, Glu86, and Arg125 each coordinate (6S)-5-formyl-5,6,7,8-tetrahydrofolate. The TrmE-type G domain occupies 221-376; sequence GLTLAIVGRP…LREQILRMVS (156 aa). K(+) is bound at residue Asn231. GTP is bound by residues 231 to 236, 250 to 256, and 275 to 278; these read NVGKSS, TAIPGTT, and DTAG. Ser235 is a binding site for Mg(2+). Thr250, Ile252, and Thr255 together coordinate K(+). Thr256 serves as a coordination point for Mg(2+). Lys454 is a binding site for (6S)-5-formyl-5,6,7,8-tetrahydrofolate.

The protein belongs to the TRAFAC class TrmE-Era-EngA-EngB-Septin-like GTPase superfamily. TrmE GTPase family. As to quaternary structure, homodimer. Heterotetramer of two MnmE and two MnmG subunits. Requires K(+) as cofactor.

It is found in the cytoplasm. Functionally, exhibits a very high intrinsic GTPase hydrolysis rate. Involved in the addition of a carboxymethylaminomethyl (cmnm) group at the wobble position (U34) of certain tRNAs, forming tRNA-cmnm(5)s(2)U34. This Koribacter versatilis (strain Ellin345) protein is tRNA modification GTPase MnmE.